The chain runs to 1148 residues: Alpha-mannosidase 2 (1148 aa).

Residues 1–5 lie on the Cytoplasmic side of the membrane; sequence MKLSR. The helical; Signal-anchor for type II membrane protein transmembrane segment at 6–26 threads the bilayer; sequence QFTVFGSAIFCVVIFSLYLML. The Lumenal segment spans residues 27–1148; sequence DRGHLDYPRG…EISTSRIRLR (1122 aa). Phosphoserine is present on residues Ser-80 and Ser-82. A glycan (N-linked (GlcNAc...) asparagine) is linked at Asn-93. Positions 174, 176, 288, and 568 each coordinate Zn(2+). Residue Asp-288 is the Nucleophile of the active site. Residues 1121–1148 are disordered; sequence MHSPPDAQNTSEVSLSPMEISTSRIRLR.

This sequence belongs to the glycosyl hydrolase 38 family. Homodimer; disulfide-linked. It depends on Zn(2+) as a cofactor. In terms of processing, glycosylated. As to expression, liver.

The protein localises to the golgi apparatus membrane. It carries out the reaction N(4)-{beta-D-GlcNAc-(1-&gt;2)-alpha-D-Man-(1-&gt;3)-[alpha-D-Man-(1-&gt;3)-[alpha-D-Man-(1-&gt;6)]-alpha-D-Man-(1-&gt;6)]-beta-D-Man-(1-&gt;4)-beta-D-GlcNAc-(1-&gt;4)-beta-D-GlcNAc}-L-asparaginyl-[protein] + 2 H2O = 2 alpha-D-mannopyranose + an N(4)-{beta-D-GlcNAc-(1-&gt;2)-alpha-D-Man-(1-&gt;3)-[alpha-D-Man-(1-&gt;6)]-beta-D-Man-(1-&gt;4)-beta-D-GlcNAc-(1-&gt;4)-beta-D-GlcNAc}-L-asparaginyl-[protein]. It functions in the pathway protein modification; protein glycosylation. With respect to regulation, inhibited by swainsonine. Functionally, catalyzes the first committed step in the biosynthesis of complex N-glycans. It controls conversion of high mannose to complex N-glycans; the final hydrolytic step in the N-glycan maturation pathway. This is Alpha-mannosidase 2 (Man2a1) from Rattus norvegicus (Rat).